The following is a 47-amino-acid chain: Protein DVU_0533 (47 aa).

A helical membrane pass occupies residues 18-37 (WTYILMGVTLLVYVGYWLFL).

It is found in the cell membrane. Functionally, HMWC (high-molecular-weight cytochrome c), ORF2, ORF3, ORF4, ORF5 and ORF6 in the HMC operon form a transmembrane protein complex that allows electron flow from the periplasmic hydrogenase to the cytoplasmic enzymes that catalyze reduction of sulfates. The sequence is that of Protein DVU_0533 from Nitratidesulfovibrio vulgaris (strain ATCC 29579 / DSM 644 / CCUG 34227 / NCIMB 8303 / VKM B-1760 / Hildenborough) (Desulfovibrio vulgaris).